Here is a 188-residue protein sequence, read N- to C-terminus: dCTP deaminase (188 aa).

DCTP contacts are provided by residues 111–116, 135–137, glutamine 156, tyrosine 170, and glutamine 180; these read KSTYAR and TLE. Glutamate 137 functions as the Proton donor/acceptor in the catalytic mechanism.

Belongs to the dCTP deaminase family. In terms of assembly, homotrimer.

The enzyme catalyses dCTP + H2O + H(+) = dUTP + NH4(+). It participates in pyrimidine metabolism; dUMP biosynthesis; dUMP from dCTP (dUTP route): step 1/2. Its function is as follows. Catalyzes the deamination of dCTP to dUTP. This is dCTP deaminase from Janthinobacterium sp. (strain Marseille) (Minibacterium massiliensis).